The primary structure comprises 262 residues: Ninja-family protein 3 (262 aa).

Residues 48 to 69 (RRNSLTCNTSKEAAGQSPEEMN) form a disordered region.

Belongs to the Ninja family.

It is found in the nucleus. The polypeptide is Ninja-family protein 3 (Zea mays (Maize)).